The following is a 341-amino-acid chain: tRNA N6-adenosine threonylcarbamoyltransferase (341 aa).

Residues H114 and H118 each contribute to the Fe cation site. Residues 136-140 (LVSGG), D170, G183, D187, and N275 contribute to the substrate site. D303 serves as a coordination point for Fe cation.

It belongs to the KAE1 / TsaD family. Fe(2+) serves as cofactor.

It is found in the cytoplasm. It catalyses the reaction L-threonylcarbamoyladenylate + adenosine(37) in tRNA = N(6)-L-threonylcarbamoyladenosine(37) in tRNA + AMP + H(+). Required for the formation of a threonylcarbamoyl group on adenosine at position 37 (t(6)A37) in tRNAs that read codons beginning with adenine. Is involved in the transfer of the threonylcarbamoyl moiety of threonylcarbamoyl-AMP (TC-AMP) to the N6 group of A37, together with TsaE and TsaB. TsaD likely plays a direct catalytic role in this reaction. The sequence is that of tRNA N6-adenosine threonylcarbamoyltransferase from Mycobacterium avium (strain 104).